The primary structure comprises 213 residues: MFENINEDRGQVGIGTLIVFIAMVLVAAIAAGVLVNTAGFLQATAEDAGQQSVNKVTNRVDVVNAHGLVNKTGEERTVDQIFLTVRLAAGSGSVSLEDTTVKYLSETTARTLTYNDTVTGSDTADPANLTTGNNFTAGVLEDGDDSFEVLNEQSDRAEMVINTSTVEGDNTNGTATGQTVKLDITSRNGGTAQVILTMPQQLAGKDNNDPIAL.

Positions 1 to 10 are excised as a propeptide; sequence MFENINEDRG. Asn70, Asn115, and Asn172 each carry an N-linked (GlcNAc...) asparagine glycan.

This sequence belongs to the archaeal flagellin family. Post-translationally, glycosylated by a pentasaccharide similar to the S-layer glycoprotein, probably comprising a hexose, 2 hexuronic acids, a methyl ester of a hexuronic acid and mannose. Glycosylation is required for biosynthesis of stable flagella.

Its subcellular location is the archaeal flagellum. Major flagellin required for motility. Not involved in PibD-dependent surface adhesion. Much more abundant in cells compared to FlgA2. The protein is Flagellin A1 (flgA1) of Haloferax volcanii (strain ATCC 29605 / DSM 3757 / JCM 8879 / NBRC 14742 / NCIMB 2012 / VKM B-1768 / DS2) (Halobacterium volcanii).